The chain runs to 206 residues: GTP cyclohydrolase 1 (206 aa).

Residues Met1–Arg17 are compositionally biased toward basic and acidic residues. The tract at residues Met1 to Glu23 is disordered. Residues Cys95, His98, and Cys166 each contribute to the Zn(2+) site.

Belongs to the GTP cyclohydrolase I family. As to quaternary structure, toroid-shaped homodecamer, composed of two pentamers of five dimers.

It carries out the reaction GTP + H2O = 7,8-dihydroneopterin 3'-triphosphate + formate + H(+). Its pathway is cofactor biosynthesis; 7,8-dihydroneopterin triphosphate biosynthesis; 7,8-dihydroneopterin triphosphate from GTP: step 1/1. This chain is GTP cyclohydrolase 1, found in Hyphomonas neptunium (strain ATCC 15444).